A 367-amino-acid polypeptide reads, in one-letter code: UDP-N-acetylglucosamine--N-acetylmuramyl-(pentapeptide) pyrophosphoryl-undecaprenol N-acetylglucosamine transferase (367 aa).

UDP-N-acetyl-alpha-D-glucosamine is bound by residues 15–17 (TGG), N127, R163, S191, I249, and Q294.

The protein belongs to the glycosyltransferase 28 family. MurG subfamily.

It localises to the cell inner membrane. It carries out the reaction di-trans,octa-cis-undecaprenyl diphospho-N-acetyl-alpha-D-muramoyl-L-alanyl-D-glutamyl-meso-2,6-diaminopimeloyl-D-alanyl-D-alanine + UDP-N-acetyl-alpha-D-glucosamine = di-trans,octa-cis-undecaprenyl diphospho-[N-acetyl-alpha-D-glucosaminyl-(1-&gt;4)]-N-acetyl-alpha-D-muramoyl-L-alanyl-D-glutamyl-meso-2,6-diaminopimeloyl-D-alanyl-D-alanine + UDP + H(+). It functions in the pathway cell wall biogenesis; peptidoglycan biosynthesis. Cell wall formation. Catalyzes the transfer of a GlcNAc subunit on undecaprenyl-pyrophosphoryl-MurNAc-pentapeptide (lipid intermediate I) to form undecaprenyl-pyrophosphoryl-MurNAc-(pentapeptide)GlcNAc (lipid intermediate II). The protein is UDP-N-acetylglucosamine--N-acetylmuramyl-(pentapeptide) pyrophosphoryl-undecaprenol N-acetylglucosamine transferase of Burkholderia ambifaria (strain MC40-6).